The chain runs to 327 residues: Zinc transport protein ZntB (327 aa).

Residues 1–271 (MESFAGKELQ…AMNRRTYTMS (271 aa)) are Cytoplasmic-facing. A helical membrane pass occupies residues 272–292 (LLAMVFLPTTFLTGLFGVNLG). At 293-300 (GIPGGDAP) the chain is on the periplasmic side. The helical transmembrane segment at 301-321 (FGFFTFCLMLVILVGGVAWWL) threads the bilayer. Topologically, residues 322–327 (KRSKWL) are cytoplasmic.

Belongs to the CorA metal ion transporter (MIT) (TC 1.A.35) family.

The protein resides in the cell inner membrane. It catalyses the reaction Zn(2+)(out) + H(+)(out) = Zn(2+)(in) + H(+)(in). Its function is as follows. Zinc transporter. Acts as a Zn(2+):proton symporter, which likely mediates zinc ion uptake. This is Zinc transport protein ZntB from Pectobacterium carotovorum subsp. carotovorum (strain PC1).